Reading from the N-terminus, the 100-residue chain is MICOS complex subunit MIC12 (100 aa).

A helical transmembrane segment spans residues Phe-10–Ile-26.

This sequence belongs to the MICOS complex subunit Mic12 family. As to quaternary structure, component of the mitochondrial contact site and cristae organizing system (MICOS) complex.

The protein localises to the mitochondrion inner membrane. Functionally, component of the MICOS complex, a large protein complex of the mitochondrial inner membrane that plays crucial roles in the maintenance of crista junctions, inner membrane architecture, and formation of contact sites to the outer membrane. This chain is MICOS complex subunit MIC12 (AIM5), found in Vanderwaltozyma polyspora (strain ATCC 22028 / DSM 70294 / BCRC 21397 / CBS 2163 / NBRC 10782 / NRRL Y-8283 / UCD 57-17) (Kluyveromyces polysporus).